The sequence spans 430 residues: UDP-N-acetylglucosamine 1-carboxyvinyltransferase (430 aa).

22 to 23 contributes to the phosphoenolpyruvate binding site; the sequence is KN. R102 serves as a coordination point for UDP-N-acetyl-alpha-D-glucosamine. The Proton donor role is filled by C126. C126 carries the post-translational modification 2-(S-cysteinyl)pyruvic acid O-phosphothioketal. UDP-N-acetyl-alpha-D-glucosamine-binding positions include 131–135, 172–175, D317, and I339; these read RPVDL and KVSV.

This sequence belongs to the EPSP synthase family. MurA subfamily.

Its subcellular location is the cytoplasm. The catalysed reaction is phosphoenolpyruvate + UDP-N-acetyl-alpha-D-glucosamine = UDP-N-acetyl-3-O-(1-carboxyvinyl)-alpha-D-glucosamine + phosphate. Its pathway is cell wall biogenesis; peptidoglycan biosynthesis. Cell wall formation. Adds enolpyruvyl to UDP-N-acetylglucosamine. This chain is UDP-N-acetylglucosamine 1-carboxyvinyltransferase, found in Rhizobium etli (strain ATCC 51251 / DSM 11541 / JCM 21823 / NBRC 15573 / CFN 42).